A 436-amino-acid polypeptide reads, in one-letter code: Trigger factor (436 aa).

A PPIase FKBP-type domain is found at glycine 163–proline 248.

It belongs to the FKBP-type PPIase family. Tig subfamily.

It localises to the cytoplasm. The catalysed reaction is [protein]-peptidylproline (omega=180) = [protein]-peptidylproline (omega=0). Functionally, involved in protein export. Acts as a chaperone by maintaining the newly synthesized protein in an open conformation. Functions as a peptidyl-prolyl cis-trans isomerase. This is Trigger factor from Bordetella bronchiseptica (strain ATCC BAA-588 / NCTC 13252 / RB50) (Alcaligenes bronchisepticus).